Consider the following 94-residue polypeptide: Putative regulatory protein Sfum_3631 (94 aa).

This sequence belongs to the RemA family.

This is Putative regulatory protein Sfum_3631 from Syntrophobacter fumaroxidans (strain DSM 10017 / MPOB).